Here is a 142-residue protein sequence, read N- to C-terminus: Metallothiol transferase FosB (142 aa).

A VOC domain is found at 5 to 120; sequence NVNHICFSVS…DGHKIELHTG (116 aa). Mg(2+)-binding residues include histidine 8, histidine 67, and glutamate 116. Glutamate 116 serves as the catalytic Proton donor/acceptor.

Belongs to the fosfomycin resistance protein family. FosB subfamily. Homodimer. Mg(2+) serves as cofactor.

It localises to the cytoplasm. Its function is as follows. Metallothiol transferase which confers resistance to fosfomycin by catalyzing the addition of a thiol cofactor to fosfomycin. L-cysteine is probably the physiological thiol donor. This chain is Metallothiol transferase FosB, found in Staphylococcus epidermidis (strain ATCC 35984 / DSM 28319 / BCRC 17069 / CCUG 31568 / BM 3577 / RP62A).